Here is a 319-residue protein sequence, read N- to C-terminus: Taste receptor type 2 member 30 (319 aa).

Met-1 is a topological domain (extracellular). Residues Ile-2 to Phe-22 form a helical membrane-spanning segment. The Cytoplasmic portion of the chain corresponds to Ala-23–Gln-46. A helical membrane pass occupies residues Ile-47–Tyr-67. Residues Ala-68 to Asn-86 are Extracellular-facing. Residues Val-87–Leu-107 form a helical membrane-spanning segment. Residues Leu-108–Lys-126 are Cytoplasmic-facing. A helical membrane pass occupies residues Ser-127–Ile-147. Residues Asn-148 to Thr-178 are Extracellular-facing. N-linked (GlcNAc...) asparagine glycans are attached at residues Asn-161 and Asn-176. A helical membrane pass occupies residues Leu-179–Ile-199. The Cytoplasmic segment spans residues Cys-200 to Gln-229. Residues Thr-230–Cys-250 traverse the membrane as a helical segment. The Extracellular segment spans residues Asn-251 to Pro-259. The helical transmembrane segment at Val-260–Ile-280 threads the bilayer. The Cytoplasmic portion of the chain corresponds to Leu-281 to Gly-319.

Belongs to the G-protein coupled receptor T2R family.

The protein resides in the membrane. Receptor that may play a role in the perception of bitterness and is gustducin-linked. May play a role in sensing the chemical composition of the gastrointestinal content. The activity of this receptor may stimulate alpha gustducin, mediate PLC-beta-2 activation and lead to the gating of TRPM5. The polypeptide is Taste receptor type 2 member 30 (TAS2R30) (Pan troglodytes (Chimpanzee)).